We begin with the raw amino-acid sequence, 636 residues long: Chaperone protein DnaK (636 aa).

Thr-198 is modified (phosphothreonine; by autocatalysis). Residues 598–636 are disordered; sequence YAAKEQPGEHGETGSGEQARKESGKDENVVDADFEEVKK. Basic and acidic residues predominate over residues 603–625; it reads QPGEHGETGSGEQARKESGKDEN. Residues 626–636 are compositionally biased toward acidic residues; sequence VVDADFEEVKK.

Belongs to the heat shock protein 70 family.

Acts as a chaperone. This Pelobacter propionicus (strain DSM 2379 / NBRC 103807 / OttBd1) protein is Chaperone protein DnaK.